A 288-amino-acid chain; its full sequence is Bifunctional protein FolD (288 aa).

NADP(+) contacts are provided by residues 166-168, serine 191, and isoleucine 232; that span reads GRS.

This sequence belongs to the tetrahydrofolate dehydrogenase/cyclohydrolase family. Homodimer.

It carries out the reaction (6R)-5,10-methylene-5,6,7,8-tetrahydrofolate + NADP(+) = (6R)-5,10-methenyltetrahydrofolate + NADPH. It catalyses the reaction (6R)-5,10-methenyltetrahydrofolate + H2O = (6R)-10-formyltetrahydrofolate + H(+). The protein operates within one-carbon metabolism; tetrahydrofolate interconversion. Functionally, catalyzes the oxidation of 5,10-methylenetetrahydrofolate to 5,10-methenyltetrahydrofolate and then the hydrolysis of 5,10-methenyltetrahydrofolate to 10-formyltetrahydrofolate. The protein is Bifunctional protein FolD of Rickettsia peacockii (strain Rustic).